A 324-amino-acid chain; its full sequence is Elongation factor Ts, mitochondrial (324 aa).

The transit peptide at 1 to 44 (MSLLRSLRFFPVACTGRSARAVLLQPSQPWHTLHAGPSLSSSAS) directs the protein to the mitochondrion. 2 positions are modified to N6-succinyllysine: K75 and K132. S269 is subject to Phosphoserine.

This sequence belongs to the EF-Ts family.

The protein resides in the mitochondrion. Its function is as follows. Associates with the EF-Tu.GDP complex and induces the exchange of GDP to GTP. It remains bound to the aminoacyl-tRNA.EF-Tu.GTP complex up to the GTP hydrolysis stage on the ribosome. The sequence is that of Elongation factor Ts, mitochondrial (Tsfm) from Rattus norvegicus (Rat).